The following is a 251-amino-acid chain: Large ribosomal subunit protein uL4 (251 aa).

Belongs to the universal ribosomal protein uL4 family. Part of the 50S ribosomal subunit.

One of the primary rRNA binding proteins, this protein initially binds near the 5'-end of the 23S rRNA. It is important during the early stages of 50S assembly. It makes multiple contacts with different domains of the 23S rRNA in the assembled 50S subunit and ribosome. Its function is as follows. Forms part of the polypeptide exit tunnel. This Methanothrix thermoacetophila (strain DSM 6194 / JCM 14653 / NBRC 101360 / PT) (Methanosaeta thermophila) protein is Large ribosomal subunit protein uL4.